We begin with the raw amino-acid sequence, 212 residues long: Large ribosomal subunit protein uL3 (212 aa).

Residues 129–156 (RRGPMGHGSKNHRAPGSTGAGTTPGRIY) form a disordered region. The segment covering 142 to 153 (APGSTGAGTTPG) has biased composition (low complexity).

It belongs to the universal ribosomal protein uL3 family. In terms of assembly, part of the 50S ribosomal subunit. Forms a cluster with proteins L14 and L19.

In terms of biological role, one of the primary rRNA binding proteins, it binds directly near the 3'-end of the 23S rRNA, where it nucleates assembly of the 50S subunit. This Acaryochloris marina (strain MBIC 11017) protein is Large ribosomal subunit protein uL3.